Reading from the N-terminus, the 306-residue chain is MGCDGGTIPKRHELVKGPRKAVKVDKTAELVARWYYCTLSQEKLCRPIVACELGRLYNKDAVIEFLLDKSADKTPMEAASHIKSLKNVTELNLADNPAWSGDKESKKGDTYDDIQSARFICPVVGLEMNGRHRFCFLRNCGCVFSERALKEIKTEVCHKCGVPFQEEDVIILNGNKEDVEVLKKRMEDRRLKSKLEKKSKKCKSAESAAQQVTTEDSPGPSKVKNSKDCIASSSGEKRHIIFTKSSDDRSSSVPGKVNKASTATKRSIADTATRNLRHTNLFTTHSSAKRPKEECSNWVTHTAYCF.

Residues 193–265 (SKLEKKSKKC…KVNKASTATK (73 aa)) form a disordered region. Over residues 235–250 (GEKRHIIFTKSSDDRS) the composition is skewed to basic and acidic residues.

The protein belongs to the rtf2 family.

The protein localises to the chromosome. Functionally, replication termination factor which is a component of the elongating replisome. Interacts with nascent DNA. This chain is Replication termination factor 2 (RTF2), found in Gallus gallus (Chicken).